The sequence spans 64 residues: Fatty acid synthase (64 aa).

One can recognise a Carrier domain in the interval 1 to 64; the sequence is AEGEGQRDLL…VLSMREVRQL (64 aa). Serine 38 is modified (O-(pantetheine 4'-phosphoryl)serine; alternate). Serine 38 is modified (phosphoserine; alternate).

Homodimer which is arranged in a head to tail fashion. Interacts with CEACAM1; this interaction is insulin and phosphorylation-dependent; reduces fatty-acid synthase activity.

It localises to the cytoplasm. The protein resides in the melanosome. It carries out the reaction acetyl-CoA + n malonyl-CoA + 2n NADPH + 2n H(+) = a long-chain fatty acid + (n+1) CoA + n CO2 + 2n NADP(+).. Functionally, fatty acid synthetase catalyzes the formation of long-chain fatty acids from acetyl-CoA, malonyl-CoA and NADPH. This multifunctional protein has 7 catalytic activities as an acyl carrier protein. The protein is Fatty acid synthase (FASN) of Oryctolagus cuniculus (Rabbit).